The primary structure comprises 506 residues: Histidine--tRNA ligase, mitochondrial (506 aa).

The transit peptide at M1–C33 directs the protein to the mitochondrion. S67 carries the post-translational modification Phosphoserine. L-histidine is bound by residues D131–T133, R158, Q174, D178, R327, and Y331–Y332. An N6-acetyllysine modification is found at K444.

It belongs to the class-II aminoacyl-tRNA synthetase family. As to quaternary structure, homodimer.

The protein resides in the mitochondrion. It carries out the reaction tRNA(His) + L-histidine + ATP = L-histidyl-tRNA(His) + AMP + diphosphate + H(+). Its function is as follows. Mitochondrial aminoacyl-tRNA synthetase that catalyzes the ATP-dependent ligation of histidine to the 3'-end of its cognate tRNA, via the formation of an aminoacyl-adenylate intermediate (His-AMP). This is Histidine--tRNA ligase, mitochondrial (HARS2) from Pongo abelii (Sumatran orangutan).